A 509-amino-acid chain; its full sequence is Bifunctional purine biosynthesis protein PurH (509 aa).

In terms of domain architecture, MGS-like spans 1-144; sequence MKRALISVSD…KNYAAVTVVV (144 aa).

Belongs to the PurH family.

It carries out the reaction (6R)-10-formyltetrahydrofolate + 5-amino-1-(5-phospho-beta-D-ribosyl)imidazole-4-carboxamide = 5-formamido-1-(5-phospho-D-ribosyl)imidazole-4-carboxamide + (6S)-5,6,7,8-tetrahydrofolate. It catalyses the reaction IMP + H2O = 5-formamido-1-(5-phospho-D-ribosyl)imidazole-4-carboxamide. Its pathway is purine metabolism; IMP biosynthesis via de novo pathway; 5-formamido-1-(5-phospho-D-ribosyl)imidazole-4-carboxamide from 5-amino-1-(5-phospho-D-ribosyl)imidazole-4-carboxamide (10-formyl THF route): step 1/1. It participates in purine metabolism; IMP biosynthesis via de novo pathway; IMP from 5-formamido-1-(5-phospho-D-ribosyl)imidazole-4-carboxamide: step 1/1. This Listeria monocytogenes serotype 4b (strain CLIP80459) protein is Bifunctional purine biosynthesis protein PurH.